A 62-amino-acid polypeptide reads, in one-letter code: UPF0434 protein Arad_4458 (62 aa).

This sequence belongs to the UPF0434 family.

The polypeptide is UPF0434 protein Arad_4458 (Rhizobium rhizogenes (strain K84 / ATCC BAA-868) (Agrobacterium radiobacter)).